Reading from the N-terminus, the 102-residue chain is Large ribosomal subunit protein bL21 (102 aa).

Belongs to the bacterial ribosomal protein bL21 family. Part of the 50S ribosomal subunit. Contacts protein L20.

Its function is as follows. This protein binds to 23S rRNA in the presence of protein L20. This is Large ribosomal subunit protein bL21 from Geobacillus thermodenitrificans (strain NG80-2).